The sequence spans 379 residues: Tryptophan 2,3-dioxygenase (379 aa).

Substrate is bound by residues 57–61 and R128; that span reads FIITH. H312 is a binding site for heme. Residue T327 coordinates substrate.

The protein belongs to the tryptophan 2,3-dioxygenase family. As to quaternary structure, homotetramer. Dimer of dimers. Heme serves as cofactor.

It carries out the reaction L-tryptophan + O2 = N-formyl-L-kynurenine. It participates in amino-acid degradation; L-tryptophan degradation via kynurenine pathway; L-kynurenine from L-tryptophan: step 1/2. The protein operates within pigment biosynthesis; ommochrome biosynthesis. Its function is as follows. Heme-dependent dioxygenase that catalyzes the oxidative cleavage of the L-tryptophan (L-Trp) pyrrole ring and converts L-tryptophan to N-formyl-L-kynurenine. Catalyzes the oxidative cleavage of the indole moiety. In Drosophila yakuba (Fruit fly), this protein is Tryptophan 2,3-dioxygenase.